A 457-amino-acid polypeptide reads, in one-letter code: UDP-N-acetylmuramate--L-alanine ligase (457 aa).

Gly118 to Thr124 provides a ligand contact to ATP.

It belongs to the MurCDEF family.

Its subcellular location is the cytoplasm. It catalyses the reaction UDP-N-acetyl-alpha-D-muramate + L-alanine + ATP = UDP-N-acetyl-alpha-D-muramoyl-L-alanine + ADP + phosphate + H(+). It participates in cell wall biogenesis; peptidoglycan biosynthesis. In terms of biological role, cell wall formation. The polypeptide is UDP-N-acetylmuramate--L-alanine ligase (Clostridium perfringens (strain 13 / Type A)).